The primary structure comprises 492 residues: Stage IV sporulation protein A (492 aa).

A Walker A motif; involved in ATP-binding motif is present at residues 24-31 (GAVRTGKS). Position 24–31 (24–31 (GAVRTGKS)) interacts with ATP.

It localises to the cytoplasm. It catalyses the reaction ATP + H2O = ADP + phosphate + H(+). Its function is as follows. ATPase. Has a role at an early stage in the morphogenesis of the spore coat outer layers. Directs the assembly of the coat and exosporium to an area around the forespore. The sequence is that of Stage IV sporulation protein A from Bacillus anthracis.